A 587-amino-acid polypeptide reads, in one-letter code: Inorganic phosphate transporter 2-1, chloroplastic (587 aa).

Residues methionine 1 to tyrosine 71 constitute a chloroplast transit peptide. A disordered region spans residues serine 74 to glutamate 106. The segment covering proline 85–glutamate 98 has biased composition (polar residues). 12 helical membrane passes run alanine 127–glycine 147, threonine 154–alanine 174, alanine 195–threonine 215, methionine 233–alanine 253, cysteine 265–tryptophan 285, alanine 289–valine 309, alanine 327–leucine 347, isoleucine 352–aspartate 372, leucine 413–phenylalanine 433, isoleucine 465–methionine 485, leucine 523–alanine 543, and alanine 559–phenylalanine 579.

The protein belongs to the inorganic phosphate transporter (PiT) (TC 2.A.20.2) family. Mostly expressed in young green tissues. Present in both auto- and heterotrophic tissues. Also expressed in root stele.

Its subcellular location is the plastid. It is found in the chloroplast inner membrane. In terms of biological role, low affinity H(+)/Pi chloroplastic cotransporter. Involved in inorganic phosphate (orthophosphate, Pi) uptake in green parts of plants in Pi-sufficient conditions. Required for Pi retranslocation during Pi deprivation. The sequence is that of Inorganic phosphate transporter 2-1, chloroplastic (PHT2-1) from Arabidopsis thaliana (Mouse-ear cress).